We begin with the raw amino-acid sequence, 234 residues long: Conidial surface nicotinamide adenine dinucleotide glycohydrolase nadA (234 aa).

The signal sequence occupies residues 1–20 (MIFTNAILVISALLPATVLS). The thump stretch occupies residues 21 to 117 (LQHTEDSLFP…LDTEEQPILG (97 aa)). Disulfide bonds link cysteine 33–cysteine 80 and cysteine 38–cysteine 50. 3 N-linked (GlcNAc...) asparagine glycosylation sites follow: asparagine 45, asparagine 95, and asparagine 118. The region spanning 120 to 212 (TLPVGMKLDR…GLIDDGYLRR (93 aa)) is the TNT domain. Arginine 129 is a catalytic residue. Residues phenylalanine 130, threonine 136, and arginine 148 each coordinate NAD(+). The active site involves glutamine 194. Residues serine 216, aspartate 219, glutamate 220, and glutamate 223 each contribute to the Ca(2+) site.

It belongs to the fungal surface NADase family. Homodimer. In terms of processing, N-glycosylated.

It is found in the secreted. The enzyme catalyses NAD(+) + H2O = ADP-D-ribose + nicotinamide + H(+). It carries out the reaction NADP(+) + H2O = ADP-D-ribose 2'-phosphate + nicotinamide + H(+). Its activity is regulated as follows. The catalytic activity is positively regulated by calcium via its binding to the calcium-binding site. Conidial surface nicotinamide adenine dinucleotide glycohydrolase that cleave NAD(+) and NADP(+) but not their reduced counterparts, NADH and NADPH. Lacks both ADP-ribosyl cyclase and base exchange activity and does not mediate synthesis of calcium messengers cADPR or NAADP. Plays a role in pathogenicity by depleting the host's NAD(+) pool. The chain is Conidial surface nicotinamide adenine dinucleotide glycohydrolase nadA from Aspergillus fumigatus (strain ATCC MYA-4609 / CBS 101355 / FGSC A1100 / Af293) (Neosartorya fumigata).